Reading from the N-terminus, the 589-residue chain is MNPSSSPNRSLNPTRGLNLYSTGNEVTWFSSTVDEVNELKPAKSKAFSISAQDQIYGTSSLKSRFSTHEASSEKDDSSDFTLVLPSNRMYIVIPGLMLSIFLSALDQTVITTAIPTIVANLDGGSSYSWIGTAYTLAQTSILPFCGIMSEVVGRKIVLYTSIVLFLFGSAMCGAAQNMLWLVLCRAVQGIGGGGITSLVTIVIADITPLQTRPYYTGCMGVTWGLASVMGPLIGGAISQKASWRWIFFINLPTGGLSLALLIFFLNLVPKPTVSFRVFLRDFDFVGIITITTGVVLFLVGLNIGSTTGHWAHANVLCYLIFGILCIAGFVVNEFYTTRTRIITPSAFKTLSLTSVMVTSFLHYYIVSTITYYIPVYFQNIKGDGPLMSGVHTLSLAVVSSLLSAVSGMGIGKLKNYRYPMIGGWIVLLAGTGSMIAIYYNTDISRTMGFLALTAVGTGNLFQPNLIAVQASVPPALIATSCSAFMLLRNMGASVGISMGAVIYDQQLTTLLKGTKYSAGLSYSQIASIPNVSEKNFVFNAYANAIRMIWIVNCPVAGVGMLLSFFTKQEKLSQSVTEYKEKDKGFKDAP.

14 helical membrane passes run 90-110 (YIVI…QTVI), 128-148 (SWIG…CGIM), 162-182 (IVLF…LWLV), 189-209 (GIGG…ITPL), 217-237 (GCMG…GGAI), 245-265 (WIFF…IFFL), 284-304 (FVGI…LNIG), 311-331 (AHAN…GFVV), 355-375 (VMVT…YIPV), 390-410 (VHTL…GMGI), 419-439 (PMIG…AIYY), 448-468 (GFLA…LIAV), 483-503 (AFML…AVIY), and 545-565 (IRMI…LSFF).

It belongs to the major facilitator superfamily. TCR/Tet family.

It localises to the membrane. This is an uncharacterized protein from Schizosaccharomyces pombe (strain 972 / ATCC 24843) (Fission yeast).